The chain runs to 183 residues: Peptidyl-tRNA hydrolase (183 aa).

A tRNA-binding site is contributed by Tyr-14. Residue His-19 is the Proton acceptor of the active site. 2 residues coordinate tRNA: Tyr-60 and Asn-62.

Belongs to the PTH family. In terms of assembly, monomer.

The protein localises to the cytoplasm. It carries out the reaction an N-acyl-L-alpha-aminoacyl-tRNA + H2O = an N-acyl-L-amino acid + a tRNA + H(+). Its function is as follows. Hydrolyzes ribosome-free peptidyl-tRNAs (with 1 or more amino acids incorporated), which drop off the ribosome during protein synthesis, or as a result of ribosome stalling. Catalyzes the release of premature peptidyl moieties from peptidyl-tRNA molecules trapped in stalled 50S ribosomal subunits, and thus maintains levels of free tRNAs and 50S ribosomes. This is Peptidyl-tRNA hydrolase from Mycoplasmoides gallisepticum (strain R(low / passage 15 / clone 2)) (Mycoplasma gallisepticum).